Reading from the N-terminus, the 269-residue chain is Indole-3-glycerol phosphate synthase (269 aa).

This sequence belongs to the TrpC family.

The enzyme catalyses 1-(2-carboxyphenylamino)-1-deoxy-D-ribulose 5-phosphate + H(+) = (1S,2R)-1-C-(indol-3-yl)glycerol 3-phosphate + CO2 + H2O. It functions in the pathway amino-acid biosynthesis; L-tryptophan biosynthesis; L-tryptophan from chorismate: step 4/5. This chain is Indole-3-glycerol phosphate synthase, found in Roseiflexus castenholzii (strain DSM 13941 / HLO8).